A 164-amino-acid chain; its full sequence is Probable calcium-binding protein CML17 (164 aa).

EF-hand domains follow at residues 4–39 (DQQAELRRVFELFDRDGDGRITREELTESLERLGMP), 40–75 (VHREELAATIARIDANGDGCVDMDEFTQLYETVMRV), 88–123 (VDEASMREAFDVFDRNGDGFITVDELGAVLASLGIK), and 126–161 (RTAEDCGRMIGQVDRDGDGRVDFLEFKQMMRGGAFA). The Ca(2+) site is built by Asp17, Asp19, Asp21, Arg23, Glu28, Asp53, Asn55, Asp57, Cys59, Glu64, Asp101, Asn103, Asp105, Glu112, Asp139, Asp141, Asp143, Arg145, and Glu150.

Potential calcium sensor. The polypeptide is Probable calcium-binding protein CML17 (CML17) (Oryza sativa subsp. japonica (Rice)).